The sequence spans 60 residues: Large ribosomal subunit protein bL33 (60 aa).

Belongs to the bacterial ribosomal protein bL33 family.

In Chlorobium phaeobacteroides (strain DSM 266 / SMG 266 / 2430), this protein is Large ribosomal subunit protein bL33.